The following is a 1182-amino-acid chain: Receptor-type guanylate cyclase gcy-19 (1182 aa).

The N-terminal stretch at methionine 1–alanine 24 is a signal peptide. The Extracellular segment spans residues glutamine 25–alanine 507. Residues asparagine 91, asparagine 369, asparagine 430, and asparagine 453 are each glycosylated (N-linked (GlcNAc...) asparagine). The helical transmembrane segment at leucine 508–phenylalanine 528 threads the bilayer. Residues tyrosine 529 to isoleucine 1182 lie on the Cytoplasmic side of the membrane. The 288-residue stretch at arginine 562 to asparagine 849 folds into the Protein kinase domain. The 131-residue stretch at threonine 907–glutamate 1037 folds into the Guanylate cyclase domain. Residues valine 1094–glutamate 1164 form a disordered region. The segment covering serine 1142–proline 1152 has biased composition (low complexity).

It belongs to the adenylyl cyclase class-4/guanylyl cyclase family. In terms of tissue distribution, expressed in IL2 sensory neurons.

The protein localises to the cell membrane. The enzyme catalyses GTP = 3',5'-cyclic GMP + diphosphate. Its function is as follows. Guanylate cyclase involved in the production of the second messenger cGMP. This is Receptor-type guanylate cyclase gcy-19 from Caenorhabditis elegans.